Here is a 261-residue protein sequence, read N- to C-terminus: Cytochrome c oxidase subunit 3 (261 aa).

The Mitochondrial matrix segment spans residues 1 to 15; the sequence is MAHQAHAYHMVDPSP. Residues 16-34 traverse the membrane as a helical segment; it reads WPLTGAIAALLLTSGTAVW. At 35–40 the chain is on the mitochondrial intermembrane side; it reads FHFHSL. A helical transmembrane segment spans residues 41-66; sequence TLLTLGNILLLLTMYQWWRDIIREGT. The Mitochondrial matrix segment spans residues 67–72; the sequence is FQGHHT. A helical transmembrane segment spans residues 73–105; sequence PPVQKGLRYGMILFITSEVFFFLGFFWAFYHAS. Over 106–128 the chain is Mitochondrial intermembrane; the sequence is LAPTPELGGCWPPTGITTLDPFE. The chain crosses the membrane as a helical span at residues 129-152; it reads VPLLNTAVLLASGVTVTWAHHSIM. At 153 to 155 the chain is on the mitochondrial matrix side; it reads EGE. A helical membrane pass occupies residues 156–183; sequence RKQTIQALTLTILLGFYFTFLQGMEYYE. The Mitochondrial intermembrane segment spans residues 184 to 190; the sequence is APFTIAD. Residues 191 to 223 form a helical membrane-spanning segment; the sequence is GVYGSTFFVATGFHGLHVIIGSTFLAVCLLRQV. At 224–232 the chain is on the mitochondrial matrix side; it reads QYHFTSEHH. Residues 233-256 traverse the membrane as a helical segment; the sequence is FGFEAAAWYWHFVDVVWLFLYVSI. Over 257-261 the chain is Mitochondrial intermembrane; it reads YWWGS.

Belongs to the cytochrome c oxidase subunit 3 family. In terms of assembly, component of the cytochrome c oxidase (complex IV, CIV), a multisubunit enzyme composed of 14 subunits. The complex is composed of a catalytic core of 3 subunits MT-CO1, MT-CO2 and MT-CO3, encoded in the mitochondrial DNA, and 11 supernumerary subunits COX4I, COX5A, COX5B, COX6A, COX6B, COX6C, COX7A, COX7B, COX7C, COX8 and NDUFA4, which are encoded in the nuclear genome. The complex exists as a monomer or a dimer and forms supercomplexes (SCs) in the inner mitochondrial membrane with NADH-ubiquinone oxidoreductase (complex I, CI) and ubiquinol-cytochrome c oxidoreductase (cytochrome b-c1 complex, complex III, CIII), resulting in different assemblies (supercomplex SCI(1)III(2)IV(1) and megacomplex MCI(2)III(2)IV(2)).

It is found in the mitochondrion inner membrane. The enzyme catalyses 4 Fe(II)-[cytochrome c] + O2 + 8 H(+)(in) = 4 Fe(III)-[cytochrome c] + 2 H2O + 4 H(+)(out). Its function is as follows. Component of the cytochrome c oxidase, the last enzyme in the mitochondrial electron transport chain which drives oxidative phosphorylation. The respiratory chain contains 3 multisubunit complexes succinate dehydrogenase (complex II, CII), ubiquinol-cytochrome c oxidoreductase (cytochrome b-c1 complex, complex III, CIII) and cytochrome c oxidase (complex IV, CIV), that cooperate to transfer electrons derived from NADH and succinate to molecular oxygen, creating an electrochemical gradient over the inner membrane that drives transmembrane transport and the ATP synthase. Cytochrome c oxidase is the component of the respiratory chain that catalyzes the reduction of oxygen to water. Electrons originating from reduced cytochrome c in the intermembrane space (IMS) are transferred via the dinuclear copper A center (CU(A)) of subunit 2 and heme A of subunit 1 to the active site in subunit 1, a binuclear center (BNC) formed by heme A3 and copper B (CU(B)). The BNC reduces molecular oxygen to 2 water molecules using 4 electrons from cytochrome c in the IMS and 4 protons from the mitochondrial matrix. The chain is Cytochrome c oxidase subunit 3 (mt-co3) from Oncorhynchus clarkii (Cutthroat trout).